A 376-amino-acid chain; its full sequence is Fibromodulin (376 aa).

Positions 1 to 18 (MQWASILLLRGLCSLSQG) are cleaved as a signal peptide. Gln-19 is subject to Pyrrolidone carboxylic acid. A sulfotyrosine mark is found at Tyr-20, Tyr-38, Tyr-53, Tyr-55, Tyr-63, and Tyr-65. The LRRNT domain maps to 67–105 (APPPPEPRDCPQECDCPPNFPTAMYCDNRNLKYLPFVPS). 8 LRR repeats span residues 106 to 127 (RMKY…VFDN), 130 to 143 (GLLW…QITS), 156 to 176 (HLER…PLPR), 177 to 198 (SLRE…ALEG), 201 to 222 (NLTA…MRGL), 224 to 245 (SLIL…LPSA), 246 to 266 (LEQL…YFRG), and 269 to 289 (KLLY…ATNT). An N-linked (GlcNAc...) (keratan sulfate) asparagine glycan is attached at Asn-127. Asn-166 carries an N-linked (GlcNAc...) (keratan sulfate) asparagine glycan. N-linked (GlcNAc...) (keratan sulfate) asparagine glycosylation occurs at Asn-201. Residue Asn-291 is glycosylated (N-linked (GlcNAc...) (keratan sulfate) asparagine). 2 LRR repeats span residues 294-315 (SLLE…NTNL) and 316-335 (ENLY…SFCT). Cys-334 and Cys-367 form a disulfide bridge. N-linked (GlcNAc...) asparagine glycosylation is present at Asn-341. Residues 344–367 (KLQVLRLDGNEIKRSAMPVDAPLC) form an LRR 11 repeat.

This sequence belongs to the small leucine-rich proteoglycan (SLRP) family. SLRP class II subfamily. In terms of assembly, binds to type I and type II collagen. In terms of processing, binds keratan sulfate chains.

Its subcellular location is the secreted. It is found in the extracellular space. The protein resides in the extracellular matrix. Functionally, affects the rate of fibrils formation. May have a primary role in collagen fibrillogenesis. This is Fibromodulin (Fmod) from Rattus norvegicus (Rat).